The following is a 276-amino-acid chain: SKA complex subunit 1 homolog (276 aa).

A coiled-coil region spans residues 48 to 78 (VDVSLTAMEAQLQAVRRRLQEEREAFPKAKK).

The protein belongs to the SKA1 family.

The sequence is that of SKA complex subunit 1 homolog from Oryza sativa subsp. japonica (Rice).